Consider the following 79-residue polypeptide: Dolichyl-diphosphooligosaccharide--protein glycosyltransferase subunit TMEM258 (79 aa).

Met-1 carries the post-translational modification N-acetylmethionine. Over 1–16 the chain is Lumenal; that stretch reads MELEAMSRYTSPVNPA. The chain crosses the membrane as a helical span at residues 17 to 37; that stretch reads VFPHLTVVLLAIGMFFTAWFF. The Cytoplasmic segment spans residues 38–54; sequence VYEVTSTKYTRDICKEL. The chain crosses the membrane as a helical span at residues 55-75; it reads LISLVASLFMGFGVLFLLLWV. The Lumenal segment spans residues 76 to 79; the sequence is GIYV.

The protein belongs to the OST5 family. Component of the oligosaccharyltransferase (OST) complex. OST exists in two different complex forms which contain common core subunits RPN1, RPN2, OST48, OST4, DAD1 and TMEM258, either STT3A or STT3B as catalytic subunits, and form-specific accessory subunits. STT3A complex assembly occurs through the formation of 3 subcomplexes. Subcomplex 1 contains RPN1 and TMEM258, subcomplex 2 contains the STT3A-specific subunits STT3A, DC2/OSTC, and KCP2 as well as the core subunit OST4, and subcomplex 3 contains RPN2, DAD1, and OST48. The STT3A complex can form stable complexes with the Sec61 complex or with both the Sec61 and TRAP complexes.

It localises to the membrane. It is found in the endoplasmic reticulum. The protein resides in the cytoplasm. It participates in protein modification; protein glycosylation. Subunit of the oligosaccharyl transferase (OST) complex that catalyzes the initial transfer of a defined glycan (Glc(3)Man(9)GlcNAc(2) in eukaryotes) from the lipid carrier dolichol-pyrophosphate to an asparagine residue within an Asn-X-Ser/Thr consensus motif in nascent polypeptide chains, the first step in protein N-glycosylation. N-glycosylation occurs cotranslationally and the complex associates with the Sec61 complex at the channel-forming translocon complex that mediates protein translocation across the endoplasmic reticulum (ER). All subunits are required for a maximal enzyme activity. The polypeptide is Dolichyl-diphosphooligosaccharide--protein glycosyltransferase subunit TMEM258 (Canis lupus familiaris (Dog)).